The following is a 122-amino-acid chain: Large ribosomal subunit protein uL18 (122 aa).

The disordered stretch occupies residues 1–25 (MSQISRKQQTQKRHRRLRRHITGTS). Over residues 9–21 (QTQKRHRRLRRHI) the composition is skewed to basic residues.

It belongs to the universal ribosomal protein uL18 family. In terms of assembly, part of the 50S ribosomal subunit; part of the 5S rRNA/L5/L18/L25 subcomplex. Contacts the 5S and 23S rRNAs.

Its function is as follows. This is one of the proteins that bind and probably mediate the attachment of the 5S RNA into the large ribosomal subunit, where it forms part of the central protuberance. This Synechococcus sp. (strain CC9605) protein is Large ribosomal subunit protein uL18.